The following is a 357-amino-acid chain: Peptide chain release factor 1 (357 aa).

Residue Gln234 is modified to N5-methylglutamine.

Belongs to the prokaryotic/mitochondrial release factor family. Methylated by PrmC. Methylation increases the termination efficiency of RF1.

It localises to the cytoplasm. Peptide chain release factor 1 directs the termination of translation in response to the peptide chain termination codons UAG and UAA. In Chlorobaculum tepidum (strain ATCC 49652 / DSM 12025 / NBRC 103806 / TLS) (Chlorobium tepidum), this protein is Peptide chain release factor 1.